A 150-amino-acid polypeptide reads, in one-letter code: Phosphoribosyl-AMP cyclohydrolase (150 aa).

Position 93 (aspartate 93) interacts with Mg(2+). Cysteine 94 contacts Zn(2+). Mg(2+) is bound by residues aspartate 95 and aspartate 97. Zn(2+)-binding residues include cysteine 112 and cysteine 119.

It belongs to the PRA-CH family. As to quaternary structure, homodimer. Mg(2+) serves as cofactor. The cofactor is Zn(2+).

The protein resides in the cytoplasm. It carries out the reaction 1-(5-phospho-beta-D-ribosyl)-5'-AMP + H2O = 1-(5-phospho-beta-D-ribosyl)-5-[(5-phospho-beta-D-ribosylamino)methylideneamino]imidazole-4-carboxamide. The protein operates within amino-acid biosynthesis; L-histidine biosynthesis; L-histidine from 5-phospho-alpha-D-ribose 1-diphosphate: step 3/9. Its function is as follows. Catalyzes the hydrolysis of the adenine ring of phosphoribosyl-AMP. The protein is Phosphoribosyl-AMP cyclohydrolase of Rhizobium etli (strain CIAT 652).